We begin with the raw amino-acid sequence, 437 residues long: ATP-dependent protease ATPase subunit HslU (437 aa).

ATP is bound by residues valine 18, 60–65, aspartate 250, glutamate 315, and arginine 387; that span reads GCGKTE.

It belongs to the ClpX chaperone family. HslU subfamily. In terms of assembly, a double ring-shaped homohexamer of HslV is capped on each side by a ring-shaped HslU homohexamer. The assembly of the HslU/HslV complex is dependent on binding of ATP.

Its subcellular location is the cytoplasm. Its function is as follows. ATPase subunit of a proteasome-like degradation complex; this subunit has chaperone activity. The binding of ATP and its subsequent hydrolysis by HslU are essential for unfolding of protein substrates subsequently hydrolyzed by HslV. HslU recognizes the N-terminal part of its protein substrates and unfolds these before they are guided to HslV for hydrolysis. The chain is ATP-dependent protease ATPase subunit HslU from Methylorubrum populi (strain ATCC BAA-705 / NCIMB 13946 / BJ001) (Methylobacterium populi).